The primary structure comprises 425 residues: UDP-N-acetylglucosamine 1-carboxyvinyltransferase (425 aa).

Phosphoenolpyruvate is bound at residue 22 to 23 (KN). R98 provides a ligand contact to UDP-N-acetyl-alpha-D-glucosamine. Catalysis depends on C122, which acts as the Proton donor. The residue at position 122 (C122) is a 2-(S-cysteinyl)pyruvic acid O-phosphothioketal. UDP-N-acetyl-alpha-D-glucosamine contacts are provided by residues 127 to 131 (RPVDQ), D313, and I335.

This sequence belongs to the EPSP synthase family. MurA subfamily.

The protein resides in the cytoplasm. The enzyme catalyses phosphoenolpyruvate + UDP-N-acetyl-alpha-D-glucosamine = UDP-N-acetyl-3-O-(1-carboxyvinyl)-alpha-D-glucosamine + phosphate. The protein operates within cell wall biogenesis; peptidoglycan biosynthesis. Its function is as follows. Cell wall formation. Adds enolpyruvyl to UDP-N-acetylglucosamine. The polypeptide is UDP-N-acetylglucosamine 1-carboxyvinyltransferase (Xylella fastidiosa (strain M12)).